The sequence spans 300 residues: Porphobilinogen deaminase (300 aa).

Cysteine 239 is modified (S-(dipyrrolylmethanemethyl)cysteine).

The protein belongs to the HMBS family. Monomer. The cofactor is dipyrromethane.

The catalysed reaction is 4 porphobilinogen + H2O = hydroxymethylbilane + 4 NH4(+). Its pathway is porphyrin-containing compound metabolism; protoporphyrin-IX biosynthesis; coproporphyrinogen-III from 5-aminolevulinate: step 2/4. Its function is as follows. Tetrapolymerization of the monopyrrole PBG into the hydroxymethylbilane pre-uroporphyrinogen in several discrete steps. The protein is Porphobilinogen deaminase of Francisella tularensis subsp. tularensis (strain FSC 198).